The chain runs to 1593 residues: ABC transporter C family member 8 (1593 aa).

Transmembrane regions (helical) follow at residues 27–47 (VVMT…LYYL), 75–95 (VIVS…IVSI), 100–120 (FEIL…GLVY), 135–155 (LYWV…TLAI), 169–189 (FSYF…VLFF), 280–300 (FYIA…GPTL), 318–338 (YDGL…SLLL), 392–412 (LCPY…SLVL), 419–439 (ASVF…LAIS), and 505–525 (LLLW…VYIL). The ABC transmembrane type-1 1 domain maps to 280-561 (FYIAALFKII…LPSVVSSIIE (282 aa)). One can recognise an ABC transporter 1 domain in the interval 594–818 (VKIDNATLEW…GSHFTELMSH (225 aa)). Position 627-634 (627-634 (GQVGSGKS)) interacts with ATP. The interval 816–938 (MSHDEQQQQL…PLQKGEKSSV (123 aa)) is disordered. A coiled-coil region spans residues 844-875 (GDNKESENNEEQNEEEEGENENLLEKVLRKSR). Residues 851–865 (NNEEQNEEEEGENEN) show a composition bias toward acidic residues. Low complexity predominate over residues 877–886 (RSPSPSSNRN). Residues 905–922 (EEDEQDERELMEDIDIDG) are compositionally biased toward acidic residues. The next 5 helical transmembrane spans lie at 1005-1025 (IGVL…LLSI), 1064-1084 (AKYY…ATFL), 1157-1177 (IIVI…VGAL), 1251-1271 (LAIR…LYTV), and 1280-1300 (GTAG…NWMV). One can recognise an ABC transmembrane type-1 2 domain in the interval 1010–1308 (ATCIIGFYVL…MVRMSCDLEN (299 aa)). The ABC transporter 2 domain maps to 1344–1578 (IVFKNLWLTY…QDSIYYSLVK (235 aa)). 1378-1385 (GRTGAGKS) provides a ligand contact to ATP.

Belongs to the ABC transporter superfamily. ABCC family. Conjugate transporter (TC 3.A.1.208) subfamily.

It is found in the membrane. This Dictyostelium discoideum (Social amoeba) protein is ABC transporter C family member 8 (abcC8).